The chain runs to 191 residues: Ribosomal RNA large subunit methyltransferase E (191 aa).

Residues glycine 49, tryptophan 51, aspartate 66, aspartate 82, and aspartate 105 each coordinate S-adenosyl-L-methionine. The active-site Proton acceptor is the lysine 145.

It belongs to the class I-like SAM-binding methyltransferase superfamily. RNA methyltransferase RlmE family.

It localises to the cytoplasm. It carries out the reaction uridine(2552) in 23S rRNA + S-adenosyl-L-methionine = 2'-O-methyluridine(2552) in 23S rRNA + S-adenosyl-L-homocysteine + H(+). Its function is as follows. Specifically methylates the uridine in position 2552 of 23S rRNA at the 2'-O position of the ribose in the fully assembled 50S ribosomal subunit. This Archaeoglobus fulgidus (strain ATCC 49558 / DSM 4304 / JCM 9628 / NBRC 100126 / VC-16) protein is Ribosomal RNA large subunit methyltransferase E.